A 212-amino-acid polypeptide reads, in one-letter code: Nucleoside diphosphate kinase homolog 5 (212 aa).

The segment at 13-145 (EKTLAIIKPD…EREIRFMFPE (133 aa)) is NDK.

This sequence belongs to the NDK family. In terms of assembly, component of the axonemal radial spoke complex 1 (RS1), at least composed of spoke head proteins RSPH1, RSPH3, RSPH9 and the cilia-specific component RSPH4A or sperm-specific component RSPH6A, spoke stalk proteins RSPH14, DNAJB13, DYDC1, ROPN1L and NME5, and the anchor protein IQUB. Interacts with IQUB. Specifically expressed in testis germinal cells.

The protein resides in the cell projection. It is found in the cilium. The protein localises to the cytoplasm. It localises to the cytoskeleton. Its subcellular location is the flagellum axoneme. Its function is as follows. Functions as part of axonemal radial spoke complexes that play an important part in the motility of sperm and cilia. Does not seem to have nucleoside diphosphate kinase (NDPK) activity. Confers protection from cell death by BAX and alters the cellular levels of several antioxidant enzymes including GPX5. May play a role in spermiogenesis by increasing the ability of late-stage spermatids to eliminate reactive oxygen species. Exhibits a 3'-5' exonuclease activity with a preference for single-stranded DNA, suggesting roles in DNA proofreading and repair. The protein is Nucleoside diphosphate kinase homolog 5 of Homo sapiens (Human).